Reading from the N-terminus, the 226-residue chain is UPF0758 protein GWCH70_2550 (226 aa).

The MPN domain maps to valine 104–valine 226. Positions 175, 177, and 188 each coordinate Zn(2+). Residues histidine 175 to aspartate 188 carry the JAMM motif motif.

This sequence belongs to the UPF0758 family.

This Geobacillus sp. (strain WCH70) protein is UPF0758 protein GWCH70_2550.